A 250-amino-acid polypeptide reads, in one-letter code: Triosephosphate isomerase (250 aa).

N9–K11 provides a ligand contact to substrate. The active-site Electrophile is H94. Residue E165 is the Proton acceptor of the active site. Substrate contacts are provided by residues G171, S211, and G232–G233.

Belongs to the triosephosphate isomerase family. As to quaternary structure, homodimer.

Its subcellular location is the cytoplasm. The enzyme catalyses D-glyceraldehyde 3-phosphate = dihydroxyacetone phosphate. Its pathway is carbohydrate biosynthesis; gluconeogenesis. It participates in carbohydrate degradation; glycolysis; D-glyceraldehyde 3-phosphate from glycerone phosphate: step 1/1. In terms of biological role, involved in the gluconeogenesis. Catalyzes stereospecifically the conversion of dihydroxyacetone phosphate (DHAP) to D-glyceraldehyde-3-phosphate (G3P). This chain is Triosephosphate isomerase, found in Alkalilimnicola ehrlichii (strain ATCC BAA-1101 / DSM 17681 / MLHE-1).